The chain runs to 58 residues: Conotoxin Im5.4 (58 aa).

Positions 1–18 (MRCLPVVVFLLLLLSAAA) are cleaved as a signal peptide. A propeptide spanning residues 19-28 (APGVGSKTER) is cleaved from the precursor.

This sequence belongs to the conotoxin T superfamily. Post-translationally, contains 2 disulfide bonds that can be either 'C1-C3, C2-C4' or 'C1-C4, C2-C3', since these disulfide connectivities have been observed for conotoxins with cysteine framework V (for examples, see AC P0DQQ7 and AC P81755). Expressed by the venom duct.

It localises to the secreted. Probable neurotoxin. In Conus imperialis (Imperial cone), this protein is Conotoxin Im5.4.